Here is a 27-residue protein sequence, read N- to C-terminus: Cupiennin-3c (27 aa).

In terms of tissue distribution, expressed by the venom gland.

It localises to the secreted. In Cupiennius salei (American wandering spider), this protein is Cupiennin-3c.